The sequence spans 547 residues: Glucose-6-phosphate isomerase (547 aa).

The active-site Proton donor is Glu-351. Active-site residues include His-382 and Lys-509.

Belongs to the GPI family.

It is found in the cytoplasm. The enzyme catalyses alpha-D-glucose 6-phosphate = beta-D-fructose 6-phosphate. The protein operates within carbohydrate biosynthesis; gluconeogenesis. It participates in carbohydrate degradation; glycolysis; D-glyceraldehyde 3-phosphate and glycerone phosphate from D-glucose: step 2/4. In terms of biological role, catalyzes the reversible isomerization of glucose-6-phosphate to fructose-6-phosphate. The polypeptide is Glucose-6-phosphate isomerase (Coxiella burnetii (strain RSA 493 / Nine Mile phase I)).